Consider the following 281-residue polypeptide: Putrescine transport system permease protein PotI (281 aa).

Residues 1-13 (MNNLPVVRSPWRI) lie on the Cytoplasmic side of the membrane. Residues 14 to 33 (VILLLGFTFLYAPMLMLVIY) form a helical membrane-spanning segment. Topologically, residues 34–68 (SFNSSKLVTVWAGWSTRWYGELLRDDAMMSAVGLS) are periplasmic. One can recognise an ABC transmembrane type-1 domain in the interval 65-260 (VGLSLTIAAC…GAVGIVGFIA (196 aa)). A helical membrane pass occupies residues 69–88 (LTIAACAATAAAILGTIAAV). Topologically, residues 89–115 (VLVRFGRFRGSNGFAFMITAPLVMPDV) are cytoplasmic. A helical transmembrane segment spans residues 116–135 (ITGLSLLLLFVALAHAIGWP). Residues 136 to 140 (ADRGM) lie on the Periplasmic side of the membrane. The chain crosses the membrane as a helical span at residues 141–160 (LTIWLAHVTFCTAYVAVVIS). Over 161–186 (SRLRELDRSIEEAAMDLGATPLKVFF) the chain is Cytoplasmic. A helical membrane pass occupies residues 187–206 (VITLPMIMPAIISGWLLAFT). Topologically, residues 207–243 (LSLDDLVIASFVSGPGATTLPMLVFSSVRMGVNPEIN) are periplasmic. Residues 244–263 (ALATLILGAVGIVGFIAWYL) form a helical membrane-spanning segment. Over 264-281 (MARAEKQRIRDIQRARRG) the chain is Cytoplasmic.

The protein belongs to the binding-protein-dependent transport system permease family. CysTW subfamily. The complex is composed of two ATP-binding proteins (PotG), two transmembrane proteins (PotH and PotI) and a solute-binding protein (PotF).

The protein resides in the cell inner membrane. Its function is as follows. Part of the ABC transporter complex PotFGHI involved in putrescine uptake. Responsible for the translocation of the substrate across the membrane. The chain is Putrescine transport system permease protein PotI from Escherichia coli O6:H1 (strain CFT073 / ATCC 700928 / UPEC).